The primary structure comprises 241 residues: Kynurenine formamidase (241 aa).

The HGGXW motif lies at 23–27; sequence HGGAW. The active-site Nucleophile is Ser95. Active-site residues include Asp191 and His223.

This sequence belongs to the kynurenine formamidase family. As to quaternary structure, homodimer.

The enzyme catalyses N-formyl-L-kynurenine + H2O = L-kynurenine + formate + H(+). It functions in the pathway amino-acid degradation; L-tryptophan degradation via kynurenine pathway; L-kynurenine from L-tryptophan: step 2/2. Functionally, catalyzes the hydrolysis of N-formyl-L-kynurenine to L-kynurenine, the second step in the kynurenine pathway of tryptophan degradation. Kynurenine may be further oxidized to nicotinic acid, NAD(H) and NADP(H). Required for elimination of toxic metabolites. In Eremothecium gossypii (strain ATCC 10895 / CBS 109.51 / FGSC 9923 / NRRL Y-1056) (Yeast), this protein is Kynurenine formamidase.